Here is a 143-residue protein sequence, read N- to C-terminus: Small ribosomal subunit protein uS12 (143 aa).

Over residues 1-19 (MGKPKGIRAARKLKTHRQA) the composition is skewed to basic residues. The segment at 1–21 (MGKPKGIRAARKLKTHRQAQR) is disordered. Residue Pro62 is modified to Hydroxyproline.

It belongs to the universal ribosomal protein uS12 family. Component of the 40S small ribosomal subunit.

Its subcellular location is the cytoplasm. It localises to the cytosol. It is found in the rough endoplasmic reticulum. The protein is Small ribosomal subunit protein uS12 (rps-23) of Brugia malayi (Filarial nematode worm).